The primary structure comprises 220 residues: Putative tyrosine-protein phosphatase 1 (220 aa).

The Tyrosine-protein phosphatase domain maps to 67-218 (FKVPLNAELF…LLARKHVRGQ (152 aa)).

The protein belongs to the protein-tyrosine phosphatase family. Non-receptor class CDC14 subfamily.

The catalysed reaction is O-phospho-L-tyrosyl-[protein] + H2O = L-tyrosyl-[protein] + phosphate. In terms of biological role, could be inactive as the active site cysteine is modified to tryptophan. This is Putative tyrosine-protein phosphatase 1 (PTP-1) from Orgyia pseudotsugata multicapsid polyhedrosis virus (OpMNPV).